The chain runs to 202 residues: Transmembrane 4 L6 family member 1 (202 aa).

Residues 1 to 9 lie on the Cytoplasmic side of the membrane; that stretch reads MCYVKCARY. Residues 10–30 traverse the membrane as a helical segment; it reads IGYSLVWAAVFCIVANALLYF. The Extracellular segment spans residues 31 to 49; the sequence is PNGETKYATEDHLSRFVWY. A helical membrane pass occupies residues 50–70; sequence FAGIVGGGLLMLLPAFVFIGM. The Cytoplasmic portion of the chain corresponds to 71–93; the sequence is DEEDCCGCCGYENYGKRCSMLSS. Residues 94-114 traverse the membrane as a helical segment; sequence VLAALIGIVGSAYCVIVASLG. Residues 115 to 161 are Extracellular-facing; the sequence is LAEGPKCSDAHGVWNYTFASTEGQYLLNSSMWSKCYEPKHIVEWHVT. Residues asparagine 129 and asparagine 142 are each glycosylated (N-linked (GlcNAc...) asparagine). Residues 162 to 182 form a helical membrane-spanning segment; the sequence is LFSILLAFAAVEFILCLIQVI. At 183–202 the chain is on the cytoplasmic side; sequence NGMLGGLCGYCCSRQQQYNC.

This sequence belongs to the L6 tetraspanin family. As to quaternary structure, present in high molecular weight complexes in tumor cells. Interacts with SDCBP2. As to expression, highly expressed in skin and lung. Moderately expressed in lymph nodes and kidneys. Also present in thymic stroma and fibroblasts.

The protein resides in the membrane. The polypeptide is Transmembrane 4 L6 family member 1 (Tm4sf1) (Mus musculus (Mouse)).